Here is a 1159-residue protein sequence, read N- to C-terminus: Phosphatidylinositol 3-kinase age-1 (1159 aa).

A compositionally biased stretch (polar residues) spans 1–25 (MSMGRSSSTTFRNRTASHGSRSLGS). Residues 1–28 (MSMGRSSSTTFRNRTASHGSRSLGSAET) form a disordered region. The PI3K-ABD domain maps to 79–179 (SEGVADMIVL…FPMLFLFEPD (101 aa)). One can recognise a PI3K-RBD domain in the interval 272–363 (RKSEANEVWE…YRCPGFVVRR (92 aa)). A C2 PI3K-type domain is found at 430–588 (LDSNLMIRPV…VKMPNEAQYK (159 aa)). Residues 607–793 (DYEACIGDPG…SLLMEAYLRG (187 aa)) enclose the PIK helical domain. In terms of domain architecture, PI3K/PI4K catalytic spans 858–1159 (VIEKAIVLGS…NWLFHAMKHY (302 aa)). Positions 864-870 (VLGSAKQ) are G-loop. Residues 1028-1036 (GIKDRHSDN) are catalytic loop. The interval 1047–1073 (HIDFGHILGHGKTKLGIQRDRQPFILT) is activation loop.

Belongs to the PI3/PI4-kinase family.

It catalyses the reaction a 1,2-diacyl-sn-glycero-3-phospho-(1D-myo-inositol) + ATP = a 1,2-diacyl-sn-glycero-3-phospho-(1D-myo-inositol-3-phosphate) + ADP + H(+). Its function is as follows. Phosphatidylinositol 3-kinase homolog that regulates longevity and diapause. Promotes cell survival during embryonic development by recruiting akt-1/2 to the plasma membrane through the production of PtdIns(3,4,5)P3. Could function in the development or neuroendocrine signaling of the dauer pathway. Mediates susceptibility to enteropathogenic E.coli infection. May negatively regulate AYI interneuron neurite outgrowth. Plays a role in aversive olfactory learning when an odor is associated with food deprivation. Regulates this process by promoting the nuclear relocalization of egl-4 in AWC olfactory neurons after odor conditioning. The chain is Phosphatidylinositol 3-kinase age-1 (age-1) from Caenorhabditis briggsae.